The chain runs to 626 residues: Chaperone protein HtpG (626 aa).

Residues 1–343 are a; substrate-binding; sequence MHKQTLSFQA…SADLPLNVSR (343 aa). The interval 344-558 is b; sequence ELLQESRAVK…DGDMSTQLAR (215 aa). Residues 559–626 form a c region; that stretch reads MLKQAGQAVP…YVKRVNALLV (68 aa).

The protein belongs to the heat shock protein 90 family. In terms of assembly, homodimer.

It localises to the cytoplasm. Its function is as follows. Molecular chaperone. Has ATPase activity. In Polaromonas sp. (strain JS666 / ATCC BAA-500), this protein is Chaperone protein HtpG.